A 1164-amino-acid polypeptide reads, in one-letter code: DNA-directed RNA polymerase 133 kDa polypeptide (1164 aa).

The protein belongs to the RNA polymerase beta chain family. The DNA-dependent RNA polymerase used for intermediate and late genes expression consists of eight subunits 147 kDa, 133 kDa, 35 kDa, 30 kDa, 22 kDa, 19 kDa, 18 kDa and 7 kDa totalling more than 500 kDa in mass. The same holoenzyme, with the addition of the transcription-specificity factor RAP94, is used for early gene expression.

Its subcellular location is the virion. It carries out the reaction RNA(n) + a ribonucleoside 5'-triphosphate = RNA(n+1) + diphosphate. Part of the DNA-dependent RNA polymerase which catalyzes the transcription of viral DNA into RNA using the four ribonucleoside triphosphates as substrates. Responsible for the transcription of early, intermediate and late genes. DNA-dependent RNA polymerase associates with the early transcription factor (ETF), itself composed of OPG118 and OPG133, thereby allowing the early genes transcription. Late transcription, and probably also intermediate transcription, require newly synthesized RNA polymerase. The protein is DNA-directed RNA polymerase 133 kDa polypeptide (OPG151) of Homo sapiens (Human).